Consider the following 953-residue polypeptide: Translation initiation factor IF-2 (953 aa).

2 disordered regions span residues 48-212 and 279-367; these read SSFS…KIDF and TKLK…FHEL. Basic and acidic residues-rich tracts occupy residues 80 to 89, 98 to 111, and 140 to 188; these read TGSEHVEKTQ, FKAEREARAKEQAA, and QGDK…ENHK. Polar residues-rich tracts occupy residues 191-207 and 282-291; these read RFTNQKKQGRQEPQSKS and KSSNISAKST. A compositionally biased stretch (basic and acidic residues) spans 300–317; the sequence is ARPEKNRELTHHSQEGQK. Over residues 322–338 the composition is skewed to low complexity; that stretch reads SWNSQNQVRNQKNSNWN. The segment covering 339–348 has biased composition (basic residues); it reads KNKKTKKGKN. The 170-residue stretch at 454–623 folds into the tr-type G domain; that stretch reads ERAPVVTIMG…LLVAEVEELK (170 aa). Residues 463 to 470 form a G1 region; sequence GHVDHGKT. 463 to 470 is a binding site for GTP; that stretch reads GHVDHGKT. Residues 488-492 form a G2 region; sequence GITQH. A G3 region spans residues 509 to 512; it reads DTPG. Residues 509–513 and 563–566 each bind GTP; these read DTPGH and NKID. The G4 stretch occupies residues 563-566; it reads NKID. Positions 599 to 601 are G5; the sequence is SAK.

It belongs to the TRAFAC class translation factor GTPase superfamily. Classic translation factor GTPase family. IF-2 subfamily.

Its subcellular location is the cytoplasm. One of the essential components for the initiation of protein synthesis. Protects formylmethionyl-tRNA from spontaneous hydrolysis and promotes its binding to the 30S ribosomal subunits. Also involved in the hydrolysis of GTP during the formation of the 70S ribosomal complex. In Streptococcus pyogenes serotype M3 (strain ATCC BAA-595 / MGAS315), this protein is Translation initiation factor IF-2.